Consider the following 380-residue polypeptide: Cystathionine gamma-synthase (380 aa).

Lysine 195 carries the post-translational modification N6-(pyridoxal phosphate)lysine.

This sequence belongs to the trans-sulfuration enzymes family. As to quaternary structure, homotetramer. Pyridoxal 5'-phosphate serves as cofactor.

Its subcellular location is the cytoplasm. The catalysed reaction is O-succinyl-L-homoserine + L-cysteine = L,L-cystathionine + succinate + H(+). Its function is as follows. Catalyzes the formation of L-cystathionine from O-succinyl-L-homoserine (OSHS) and L-cysteine, via a gamma-replacement reaction. In the absence of thiol, catalyzes gamma-elimination to form 2-oxobutanoate, succinate and ammonia. The protein is Cystathionine gamma-synthase (metB) of Helicobacter pylori (strain ATCC 700392 / 26695) (Campylobacter pylori).